The chain runs to 62 residues: Glucagon (62 aa).

It belongs to the glucagon family.

It is found in the secreted. In terms of biological role, promotes hydrolysis of glycogen and lipids, and raises the blood sugar level. This Scyliorhinus canicula (Small-spotted catshark) protein is Glucagon (gcg).